The primary structure comprises 304 residues: Ribosomal protein L11 methyltransferase (304 aa).

S-adenosyl-L-methionine is bound by residues T152, G173, D195, and N234.

Belongs to the methyltransferase superfamily. PrmA family.

The protein resides in the cytoplasm. It carries out the reaction L-lysyl-[protein] + 3 S-adenosyl-L-methionine = N(6),N(6),N(6)-trimethyl-L-lysyl-[protein] + 3 S-adenosyl-L-homocysteine + 3 H(+). Methylates ribosomal protein L11. This chain is Ribosomal protein L11 methyltransferase, found in Cupriavidus metallidurans (strain ATCC 43123 / DSM 2839 / NBRC 102507 / CH34) (Ralstonia metallidurans).